A 567-amino-acid chain; its full sequence is Myo-inositol transporter 1 (567 aa).

Over 1–88 (MSARPAQPNI…KFVWMLVSAA (88 aa)) the chain is Cytoplasmic. Positions 14-42 (IRTSLSGYPSPTHSGSSTPASLEFSDGRL) are disordered. The span at 16–33 (TSLSGYPSPTHSGSSTPA) shows a compositional bias: polar residues. The chain crosses the membrane as a helical span at residues 89 to 109 (AISGLLFGYDTAAISGMLVII). The Extracellular segment spans residues 110 to 123 (KDDLGTILSSWQKE). The chain crosses the membrane as a helical span at residues 124-144 (VITSATTLGALLGGLAAGCVS). Over 145–150 (DFTGRR) the chain is Cytoplasmic. The helical transmembrane segment at 151-171 (LVIVFANVAFIGGSICQAACH) threads the bilayer. The Extracellular segment spans residues 172-180 (TVAAMIAGR). A helical membrane pass occupies residues 181-201 (FIVGLGVGLASCIVPLYIGEL). Over 202–209 (APTMIRGR) the chain is Cytoplasmic. The helical transmembrane segment at 210–230 (LVTINCVAVTLGQVVAYAIGA) threads the bilayer. Residues 231-240 (SFQNVHNGWR) are Extracellular-facing. The chain crosses the membrane as a helical span at residues 241–261 (WIVGLGAMPSFVQLAAIGFLP). The Cytoplasmic segment spans residues 262-343 (ESPRILLLRS…IGCGLQAAQQ (82 aa)). A helical transmembrane segment spans residues 344-364 (LCGFNTLMYYSATIFAMLGFN). Residue N365 is glycosylated (N-linked (GlcNAc...) asparagine). Residues 365-367 (NAT) are Extracellular-facing. The chain crosses the membrane as a helical span at residues 368-388 (AVGLIVATVNVLFTLVALKIV). The Cytoplasmic segment spans residues 389–397 (DPVGRRRTM). Residues 398–418 (LFTLPIMILALVFAAIFFYYL) form a helical membrane-spanning segment. Topologically, residues 419 to 435 (TLSTNGILIEDHDYPRS) are extracellular. Residues 436 to 456 (LSILVLLSMLLYVAGYATGLG) traverse the membrane as a helical segment. Over 457–476 (NIPWQQGELFRLEVRGIGTS) the chain is Cytoplasmic. Residues 477–497 (ICTAVNWSCNMLIAGTFLSLM) form a helical membrane-spanning segment. The Extracellular segment spans residues 498 to 503 (DAATPS). The helical transmembrane segment at 504–524 (GAFGIYAGFCVIGWVFCWMLY) threads the bilayer. Over 525 to 567 (PETSGLSLEEVYFVFEEGFGIKKSQQLRKQKLVEAAKLKAIFE) the chain is Cytoplasmic.

The protein belongs to the major facilitator superfamily. Sugar transporter (TC 2.A.1.1) family.

The protein localises to the cell membrane. The enzyme catalyses myo-inositol(out) + H(+)(out) = myo-inositol(in) + H(+)(in). In terms of biological role, may function as a transporter or as a sensor for myo-inositol. In Cryptococcus neoformans var. grubii serotype A (strain H99 / ATCC 208821 / CBS 10515 / FGSC 9487) (Filobasidiella neoformans var. grubii), this protein is Myo-inositol transporter 1.